We begin with the raw amino-acid sequence, 512 residues long: Putative aldehyde-dehydrogenase-like protein y4uC (512 aa).

The interval 14–41 is disordered; it reads MKPERGRRSPLPRRPTRPPDERSSGIGN. An NADP(+)-binding site is contributed by 266–271; the sequence is GGFATG. Catalysis depends on residues Glu-286 and Cys-320.

Belongs to the aldehyde dehydrogenase family.

It functions in the pathway amino-acid degradation; 4-aminobutanoate degradation. Could be a succinate-semialdehyde dehydrogenase (NADP(+)). The chain is Putative aldehyde-dehydrogenase-like protein y4uC from Sinorhizobium fredii (strain NBRC 101917 / NGR234).